We begin with the raw amino-acid sequence, 343 residues long: Small ribosomal subunit biogenesis GTPase RsgA (343 aa).

The CP-type G domain maps to histidine 116–phenylalanine 275. GTP contacts are provided by residues asparagine 163–aspartate 166 and glycine 217–serine 225. Positions 299, 304, 306, and 312 each coordinate Zn(2+).

Belongs to the TRAFAC class YlqF/YawG GTPase family. RsgA subfamily. Monomer. Associates with 30S ribosomal subunit, binds 16S rRNA. The cofactor is Zn(2+).

The protein localises to the cytoplasm. Its function is as follows. One of several proteins that assist in the late maturation steps of the functional core of the 30S ribosomal subunit. Helps release RbfA from mature subunits. May play a role in the assembly of ribosomal proteins into the subunit. Circularly permuted GTPase that catalyzes slow GTP hydrolysis, GTPase activity is stimulated by the 30S ribosomal subunit. The chain is Small ribosomal subunit biogenesis GTPase RsgA from Pseudomonas putida (strain ATCC 700007 / DSM 6899 / JCM 31910 / BCRC 17059 / LMG 24140 / F1).